Here is a 147-residue protein sequence, read N- to C-terminus: Large ribosomal subunit protein uL16 (147 aa).

It belongs to the universal ribosomal protein uL16 family. As to quaternary structure, part of the 50S ribosomal subunit.

Its function is as follows. Binds 23S rRNA and is also seen to make contacts with the A and possibly P site tRNAs. The protein is Large ribosomal subunit protein uL16 of Clostridium novyi (strain NT).